Here is a 961-residue protein sequence, read N- to C-terminus: Lon protease homolog, mitochondrial (961 aa).

The N-terminal 67 residues, 1-67 (MAGGTGCVRL…SPAAAGHWRG (67 aa)), are a transit peptide targeting the mitochondrion. 2 disordered regions span residues 76–103 (GGGAFSGGEDASEGGAEDGASGVGGSAG) and 220–262 (QLEV…VVVG). The Lon N-terminal domain maps to 125–371 (LPLIAVTRNP…KALSLLKKEF (247 aa)). The segment covering 235 to 244 (KLRKKPKRGK) has biased composition (basic residues). A compositionally biased stretch (basic and acidic residues) spans 245-257 (KEAEEDGATKRPL). 524–531 (GPPGVGKT) contributes to the ATP binding site. The region spanning 760-951 (VTPPGVVMGL…REIFDIAFPE (192 aa)) is the Lon proteolytic domain. The segment covering 784 to 801 (SLRRPRDRDSDKGDKDGS) has biased composition (basic and acidic residues). The tract at residues 784–803 (SLRRPRDRDSDKGDKDGSLE) is disordered. Catalysis depends on residues S857 and K900.

Belongs to the peptidase S16 family. As to quaternary structure, homohexamer. Organized in a ring with a central cavity. The ATP-binding and proteolytic domains (AP-domain) form a hexameric chamber, while the N-terminal domain is arranged as a trimer of dimers. DNA and RNA binding is stimulated by substrate and inhibited by ATP binding. Interacts with TWNK and mitochondrial DNA polymerase subunit POLG.

The protein localises to the mitochondrion matrix. It catalyses the reaction Hydrolysis of proteins in presence of ATP.. Functionally, ATP-dependent serine protease that mediates the selective degradation of misfolded, unassembled or oxidatively damaged polypeptides as well as certain short-lived regulatory proteins in the mitochondrial matrix. Endogenous substrates include mitochondrial steroidogenic acute regulatory (StAR) protein, DELE1, helicase Twinkle (TWNK) and the large ribosomal subunit protein MRPL32/bL32m. MRPL32/bL32m is protected from degradation by LONP1 when it is bound to a nucleic acid (RNA), but TWNK is not. May also have a chaperone function in the assembly of inner membrane protein complexes. Participates in the regulation of mitochondrial gene expression and in the maintenance of the integrity of the mitochondrial genome. Binds to mitochondrial promoters and RNA in a single-stranded, site-specific, and strand-specific manner. May regulate mitochondrial DNA replication and/or gene expression using site-specific, single-stranded DNA binding to target the degradation of regulatory proteins binding to adjacent sites in mitochondrial promoters. The sequence is that of Lon protease homolog, mitochondrial from Bos taurus (Bovine).